Reading from the N-terminus, the 660-residue chain is tRNA 5-methylaminomethyl-2-thiouridine biosynthesis bifunctional protein MnmC (660 aa).

Positions 1-241 are tRNA (mnm(5)s(2)U34)-methyltransferase; the sequence is MNDHPAQDAF…KREILRGHLQ (241 aa). An FAD-dependent cmnm(5)s(2)U34 oxidoreductase region spans residues 268–660; sequence IGAGLAGCAT…FLLRKLIRGT (393 aa).

In the N-terminal section; belongs to the methyltransferase superfamily. tRNA (mnm(5)s(2)U34)-methyltransferase family. This sequence in the C-terminal section; belongs to the DAO family. FAD is required as a cofactor.

Its subcellular location is the cytoplasm. It carries out the reaction 5-aminomethyl-2-thiouridine(34) in tRNA + S-adenosyl-L-methionine = 5-methylaminomethyl-2-thiouridine(34) in tRNA + S-adenosyl-L-homocysteine + H(+). Catalyzes the last two steps in the biosynthesis of 5-methylaminomethyl-2-thiouridine (mnm(5)s(2)U) at the wobble position (U34) in tRNA. Catalyzes the FAD-dependent demodification of cmnm(5)s(2)U34 to nm(5)s(2)U34, followed by the transfer of a methyl group from S-adenosyl-L-methionine to nm(5)s(2)U34, to form mnm(5)s(2)U34. The chain is tRNA 5-methylaminomethyl-2-thiouridine biosynthesis bifunctional protein MnmC from Stutzerimonas stutzeri (strain A1501) (Pseudomonas stutzeri).